The following is a 172-amino-acid chain: C-phycocyanin-2 beta subunit (172 aa).

The residue at position 72 (N72) is an N4-methylasparagine. Residues C82 and C153 each contribute to the (2R,3E)-phycocyanobilin site.

This sequence belongs to the phycobiliprotein family. As to quaternary structure, heterodimer of an alpha and a beta subunit, which further assembles into trimers and the trimers into hexamers. Contains two covalently linked bilin chromophores.

It localises to the cellular thylakoid membrane. In terms of biological role, light-harvesting photosynthetic bile pigment-protein from the phycobiliprotein complex (phycobilisome, PBS). Phycocyanin is the major phycobiliprotein in the PBS rod. This is C-phycocyanin-2 beta subunit (cpcB2) from Microchaete diplosiphon (Fremyella diplosiphon).